The following is a 223-amino-acid chain: UPF0441 protein YgiB (223 aa).

Residues 178–195 (TVPKTAMAPKPATTTTVT) show a composition bias toward low complexity. The segment at 178-223 (TVPKTAMAPKPATTTTVTRGGFGESVAKQSTMQRSATGTSSRSMGG) is disordered. Positions 204–223 (AKQSTMQRSATGTSSRSMGG) are enriched in polar residues.

This sequence belongs to the UPF0441 family.

The polypeptide is UPF0441 protein YgiB (Shigella flexneri serotype 5b (strain 8401)).